The chain runs to 179 residues: Large ribosomal subunit protein uL5 (179 aa).

This sequence belongs to the universal ribosomal protein uL5 family. In terms of assembly, part of the 50S ribosomal subunit; part of the 5S rRNA/L5/L18/L25 subcomplex. Contacts the 5S rRNA and the P site tRNA. Forms a bridge to the 30S subunit in the 70S ribosome.

Functionally, this is one of the proteins that bind and probably mediate the attachment of the 5S RNA into the large ribosomal subunit, where it forms part of the central protuberance. In the 70S ribosome it contacts protein S13 of the 30S subunit (bridge B1b), connecting the 2 subunits; this bridge is implicated in subunit movement. Contacts the P site tRNA; the 5S rRNA and some of its associated proteins might help stabilize positioning of ribosome-bound tRNAs. The sequence is that of Large ribosomal subunit protein uL5 from Pseudomonas putida (strain W619).